A 120-amino-acid chain; its full sequence is Seminal plasma protein HSP-1 (120 aa).

2 consecutive repeat copies span residues Asp-1 to Val-13 and Asp-16 to Val-28. Positions Asp-1 to Val-28 are 2 X approximate repeats. Residues Thr-5, Thr-12, Thr-22, and Thr-27 are each glycosylated (O-linked (GalNAc...) threonine). Fibronectin type-II domains follow at residues Thr-29–Ala-73 and Thr-74–Cys-120. Intrachain disulfides connect Cys-34-Cys-58, Cys-48-Cys-71, Cys-79-Cys-105, and Cys-93-Cys-120.

This sequence belongs to the seminal plasma protein family. One glycoform exists as a monomer while the other forms a heterotetramer with HSP-2 and binds heparin. Post-translationally, O-glycosylated on Thr. There are two forms of HSP-1 which probably differ in the amount of sialylation of polysaccharide. In terms of tissue distribution, major component of seminal plasma.

It is found in the secreted. In terms of biological role, could enhance the fertilizing capacity of spermatozoa upon interaction with heparin-like glycosaminoglycans present in the female genital tract. The protein is Seminal plasma protein HSP-1 of Equus caballus (Horse).